A 465-amino-acid chain; its full sequence is Putative ABC transporter ATP-binding protein MG065 homolog (465 aa).

The ABC transporter domain occupies 232 to 465; sequence IELKNVYKYI…PKQVEDINWI (234 aa). 268–275 is a binding site for ATP; the sequence is GPSGSGKT.

This sequence belongs to the ABC transporter superfamily.

This is Putative ABC transporter ATP-binding protein MG065 homolog from Mycoplasma pneumoniae (strain ATCC 29342 / M129 / Subtype 1) (Mycoplasmoides pneumoniae).